Consider the following 482-residue polypeptide: ATP synthase subunit beta (482 aa).

161-168 is a binding site for ATP; it reads GGAGVGKT.

Belongs to the ATPase alpha/beta chains family. As to quaternary structure, F-type ATPases have 2 components, CF(1) - the catalytic core - and CF(0) - the membrane proton channel. CF(1) has five subunits: alpha(3), beta(3), gamma(1), delta(1), epsilon(1). CF(0) has four main subunits: a(1), b(1), b'(1) and c(9-12).

The protein localises to the cellular thylakoid membrane. It carries out the reaction ATP + H2O + 4 H(+)(in) = ADP + phosphate + 5 H(+)(out). Functionally, produces ATP from ADP in the presence of a proton gradient across the membrane. The catalytic sites are hosted primarily by the beta subunits. The protein is ATP synthase subunit beta of Gloeothece citriformis (strain PCC 7424) (Cyanothece sp. (strain PCC 7424)).